The primary structure comprises 222 residues: DNA mismatch repair protein MutH (222 aa).

Belongs to the MutH family.

The protein resides in the cytoplasm. Sequence-specific endonuclease that cleaves unmethylated GATC sequences. It is involved in DNA mismatch repair. In Pasteurella multocida (strain Pm70), this protein is DNA mismatch repair protein MutH.